We begin with the raw amino-acid sequence, 388 residues long: Methylthioribose-1-phosphate isomerase (388 aa).

Asp-253 functions as the Proton donor in the catalytic mechanism.

The protein belongs to the eIF-2B alpha/beta/delta subunits family. MtnA subfamily.

The protein localises to the cytoplasm. It localises to the nucleus. The catalysed reaction is 5-(methylsulfanyl)-alpha-D-ribose 1-phosphate = 5-(methylsulfanyl)-D-ribulose 1-phosphate. It functions in the pathway amino-acid biosynthesis; L-methionine biosynthesis via salvage pathway; L-methionine from S-methyl-5-thio-alpha-D-ribose 1-phosphate: step 1/6. Its function is as follows. Catalyzes the interconversion of methylthioribose-1-phosphate (MTR-1-P) into methylthioribulose-1-phosphate (MTRu-1-P). The chain is Methylthioribose-1-phosphate isomerase from Fusarium vanettenii (strain ATCC MYA-4622 / CBS 123669 / FGSC 9596 / NRRL 45880 / 77-13-4) (Fusarium solani subsp. pisi).